Reading from the N-terminus, the 163-residue chain is MPAPILPLIEAAAQWPPTGALIGLDLGTKTIGVAVSDPARRLATGVETILRKTFTTDAARLLALATERKAVGLVLGLPINMDASEGPRAQSTRAFARNLARLTELPIGLWDERLSTAAVERELIANDVSRAKRAKVIDEHAAIFILQGALDRLAVLNRSTGAA.

Belongs to the YqgF nuclease family.

The protein resides in the cytoplasm. Its function is as follows. Could be a nuclease involved in processing of the 5'-end of pre-16S rRNA. This Rhodopseudomonas palustris (strain BisA53) protein is Putative pre-16S rRNA nuclease.